A 404-amino-acid chain; its full sequence is Probable tRNA sulfurtransferase (404 aa).

The 106-residue stretch at 60–165 folds into the THUMP domain; the sequence is QPIVEALKLV…DEAAYISYEE (106 aa). ATP contacts are provided by residues 183 to 184, 208 to 209, R265, G287, and Q296; these read ML and HF.

It belongs to the ThiI family.

The protein localises to the cytoplasm. The catalysed reaction is [ThiI sulfur-carrier protein]-S-sulfanyl-L-cysteine + a uridine in tRNA + 2 reduced [2Fe-2S]-[ferredoxin] + ATP + H(+) = [ThiI sulfur-carrier protein]-L-cysteine + a 4-thiouridine in tRNA + 2 oxidized [2Fe-2S]-[ferredoxin] + AMP + diphosphate. The enzyme catalyses [ThiS sulfur-carrier protein]-C-terminal Gly-Gly-AMP + S-sulfanyl-L-cysteinyl-[cysteine desulfurase] + AH2 = [ThiS sulfur-carrier protein]-C-terminal-Gly-aminoethanethioate + L-cysteinyl-[cysteine desulfurase] + A + AMP + 2 H(+). The protein operates within cofactor biosynthesis; thiamine diphosphate biosynthesis. Functionally, catalyzes the ATP-dependent transfer of a sulfur to tRNA to produce 4-thiouridine in position 8 of tRNAs, which functions as a near-UV photosensor. Also catalyzes the transfer of sulfur to the sulfur carrier protein ThiS, forming ThiS-thiocarboxylate. This is a step in the synthesis of thiazole, in the thiamine biosynthesis pathway. The sulfur is donated as persulfide by IscS. The protein is Probable tRNA sulfurtransferase of Streptococcus pyogenes serotype M3 (strain ATCC BAA-595 / MGAS315).